Here is a 318-residue protein sequence, read N- to C-terminus: SPX domain-containing protein 4 (318 aa).

The SPX domain occupies 1-187; that stretch reads MKFGKEFRTH…GGLLRLPFTQ (187 aa). Positions 226–237 are enriched in low complexity; it reads SAVQAHSSSHQH. Disordered stretches follow at residues 226–247 and 284–318; these read SAVQ…AETS and SSLL…GPSH. Over residues 305–318 the composition is skewed to basic and acidic residues; that stretch reads NKDDSEKEDTGPSH.

The polypeptide is SPX domain-containing protein 4 (SPX4) (Arabidopsis thaliana (Mouse-ear cress)).